We begin with the raw amino-acid sequence, 154 residues long: UPF0756 membrane protein BLi03063/BL00400 (154 aa).

4 helical membrane passes run 8–28, 54–74, 87–107, and 117–137; these read FLILLLAIALIAKNQSLIIAV, WGVTVITIAVLVPIATGEIGF, WIALGAGILVALIAKNGITLL, and LVFGTILAVALFKGVAVGPLI.

The protein belongs to the UPF0756 family.

It localises to the cell membrane. This chain is UPF0756 membrane protein BLi03063/BL00400, found in Bacillus licheniformis (strain ATCC 14580 / DSM 13 / JCM 2505 / CCUG 7422 / NBRC 12200 / NCIMB 9375 / NCTC 10341 / NRRL NRS-1264 / Gibson 46).